A 275-amino-acid chain; its full sequence is Succinate dehydrogenase [ubiquinone] iron-sulfur subunit, mitochondrial (275 aa).

The transit peptide at 1 to 24 directs the protein to the mitochondrion; sequence MFSRRIQVLSPFLKHFVNRNARMM. The 2Fe-2S ferredoxin-type domain occupies 57-137; sequence PEVKPKLQKY…PTKIYPLPHC (81 aa). Residues Cys98, Cys103, Cys106, and Cys118 each coordinate [2Fe-2S] cluster. One can recognise a 4Fe-4S ferredoxin-type domain in the interval 178–208; that stretch reads DRAKLDGLYECILCACCSTSCPSYWWNSEEY. Residues Cys188, Cys191, and Cys194 each contribute to the [4Fe-4S] cluster site. Cys198 is a binding site for [3Fe-4S] cluster. Trp203 is a binding site for a ubiquinone. Positions 245 and 251 each coordinate [3Fe-4S] cluster. Cys255 contacts [4Fe-4S] cluster.

It belongs to the succinate dehydrogenase/fumarate reductase iron-sulfur protein family. Component of complex II composed of four subunits: a flavoprotein (FP), an iron-sulfur protein (IP), and a cytochrome b composed of a large and a small subunit. [2Fe-2S] cluster is required as a cofactor. Requires [3Fe-4S] cluster as cofactor. The cofactor is [4Fe-4S] cluster.

Its subcellular location is the mitochondrion inner membrane. It carries out the reaction a quinone + succinate = fumarate + a quinol. It functions in the pathway carbohydrate metabolism; tricarboxylic acid cycle; fumarate from succinate (eukaryal route): step 1/1. Its function is as follows. Iron-sulfur protein (IP) subunit of succinate dehydrogenase (SDH) that is involved in complex II of the mitochondrial electron transport chain and is responsible for transferring electrons from succinate to ubiquinone (coenzyme Q). The sequence is that of Succinate dehydrogenase [ubiquinone] iron-sulfur subunit, mitochondrial (sdh2) from Schizosaccharomyces pombe (strain 972 / ATCC 24843) (Fission yeast).